The sequence spans 608 residues: UvrABC system protein C (608 aa).

The 79-residue stretch at H13–V91 folds into the GIY-YIG domain. The 36-residue stretch at Q201–V236 folds into the UVR domain.

Belongs to the UvrC family. As to quaternary structure, interacts with UvrB in an incision complex.

Its subcellular location is the cytoplasm. Functionally, the UvrABC repair system catalyzes the recognition and processing of DNA lesions. UvrC both incises the 5' and 3' sides of the lesion. The N-terminal half is responsible for the 3' incision and the C-terminal half is responsible for the 5' incision. In Pasteurella multocida (strain Pm70), this protein is UvrABC system protein C.